Reading from the N-terminus, the 422-residue chain is 5-hydroxytryptamine receptor 1A (422 aa).

Residues 1-23 (MDVLSPGQGNNTTSPPAPFETGG) form a disordered region. Topologically, residues 1–38 (MDVLSPGQGNNTTSPPAPFETGGNTTGISDVTFSYQVI) are extracellular. 3 N-linked (GlcNAc...) asparagine glycosylation sites follow: Asn-10, Asn-11, and Asn-24. A helical transmembrane segment spans residues 39-59 (TSLLLGTLIFCAVLGNACVVA). Residues 60–73 (AIALERSLQNVANY) are Cytoplasmic-facing. The chain crosses the membrane as a helical span at residues 74–98 (LIGSLAVTDLMVSVLVLPMAALYQV). Residues 99 to 107 (LNKWTLGQV) lie on the Extracellular side of the membrane. Residues 108-132 (TCDLFIALDVLCCTSSILHLCAIAL) form a helical membrane-spanning segment. An intrachain disulfide couples Cys-109 to Cys-187. 2 residues coordinate serotonin: Asp-116 and Cys-120. Positions 133 to 135 (DRY) match the DRY motif; important for ligand-induced conformation changes motif. Residues 133 to 152 (DRYWAITDPIDYVNKRTPRR) lie on the Cytoplasmic side of the membrane. A helical transmembrane segment spans residues 153 to 174 (AAALISLTWLIGFLISIPPMLG). At 175–193 (WRTPEDRSDPDACTISKDH) the chain is on the extracellular side. The helical transmembrane segment at 194–216 (GYTIYSTFGAFYIPLLLMLVLYG) threads the bilayer. At 217-346 (RIFRAARFRI…LARERKTVKT (130 aa)) the chain is on the cytoplasmic side. Positions 235–263 (KTGADTHHGASPAPQPKKSVNGESGSRNW) are disordered. Residues Thr-314, Lys-345, Thr-346, and Gly-352 each contribute to the 1D-myo-inositol 4-phosphate site. Residues 347–370 (LGIIMGTFILCWLPFFIVALVLPF) form a helical membrane-spanning segment. Residues 371–378 (CESSCHMP) lie on the Extracellular side of the membrane. Residues 379–403 (TLLGAIINWLGYSNSLLNPVIYAYF) traverse the membrane as a helical segment. Residues 396 to 400 (NPVIY) carry the NPxxY motif; important for ligand-induced conformation changes and signaling motif. Residues Phe-403, Asn-404, and Lys-405 each coordinate 1D-myo-inositol 4-phosphate. The Cytoplasmic segment spans residues 404–422 (NKDFQNAFKKIIKCKFCRQ).

It belongs to the G-protein coupled receptor 1 family. 5-hydroxytryptamine receptor subfamily. HTR1A sub-subfamily. In terms of assembly, heterodimer; heterodimerizes with GPER1. Interacts with YIF1B. Interacts with GPR39 and GALR1.

The protein localises to the cell membrane. Its subcellular location is the cell projection. The protein resides in the dendrite. With respect to regulation, G-protein coupled receptor activity is regulated by lipids: phosphatidylinositol 4-phosphate increases HTR1A-mediated activity. In terms of biological role, G-protein coupled receptor for 5-hydroxytryptamine (serotonin). Also functions as a receptor for various drugs and psychoactive substances. Ligand binding causes a conformation change that triggers signaling via guanine nucleotide-binding proteins (G proteins) and modulates the activity of downstream effectors, such as adenylate cyclase. HTR1A is coupled to G(i)/G(o) G alpha proteins and mediates inhibitory neurotransmission: signaling inhibits adenylate cyclase activity and activates a phosphatidylinositol-calcium second messenger system that regulates the release of Ca(2+) ions from intracellular stores. Beta-arrestin family members regulate signaling by mediating both receptor desensitization and resensitization processes. The protein is 5-hydroxytryptamine receptor 1A (HTR1A) of Pongo pygmaeus (Bornean orangutan).